The following is a 434-amino-acid chain: Methylenetetrahydrofolate--tRNA-(uracil-5-)-methyltransferase TrmFO (434 aa).

9-14 (GAGLAG) is an FAD binding site.

Belongs to the MnmG family. TrmFO subfamily. It depends on FAD as a cofactor.

Its subcellular location is the cytoplasm. The enzyme catalyses uridine(54) in tRNA + (6R)-5,10-methylene-5,6,7,8-tetrahydrofolate + NADH + H(+) = 5-methyluridine(54) in tRNA + (6S)-5,6,7,8-tetrahydrofolate + NAD(+). The catalysed reaction is uridine(54) in tRNA + (6R)-5,10-methylene-5,6,7,8-tetrahydrofolate + NADPH + H(+) = 5-methyluridine(54) in tRNA + (6S)-5,6,7,8-tetrahydrofolate + NADP(+). Catalyzes the folate-dependent formation of 5-methyl-uridine at position 54 (M-5-U54) in all tRNAs. In Listeria innocua serovar 6a (strain ATCC BAA-680 / CLIP 11262), this protein is Methylenetetrahydrofolate--tRNA-(uracil-5-)-methyltransferase TrmFO.